The primary structure comprises 373 residues: Flagellar P-ring protein (373 aa).

The signal sequence occupies residues 1–26 (MKLFFRFLTLVAVLAMSLADVAPAWA).

This sequence belongs to the FlgI family. In terms of assembly, the basal body constitutes a major portion of the flagellar organelle and consists of four rings (L,P,S, and M) mounted on a central rod.

It is found in the periplasm. The protein localises to the bacterial flagellum basal body. Assembles around the rod to form the L-ring and probably protects the motor/basal body from shearing forces during rotation. This chain is Flagellar P-ring protein, found in Rhizobium leguminosarum bv. trifolii (strain WSM2304).